The chain runs to 399 residues: Putative 8-amino-7-oxononanoate synthase (399 aa).

Arginine 24 is a binding site for substrate. A pyridoxal 5'-phosphate-binding site is contributed by 111-112 (GW). Histidine 141 contacts substrate. Pyridoxal 5'-phosphate-binding positions include serine 189, 214–217 (DEAH), and 243–246 (TFSK). The residue at position 246 (lysine 246) is an N6-(pyridoxal phosphate)lysine. Threonine 360 provides a ligand contact to substrate.

This sequence belongs to the class-II pyridoxal-phosphate-dependent aminotransferase family. BioF subfamily. Homodimer. Pyridoxal 5'-phosphate is required as a cofactor.

It carries out the reaction 6-carboxyhexanoyl-[ACP] + L-alanine + H(+) = (8S)-8-amino-7-oxononanoate + holo-[ACP] + CO2. It functions in the pathway cofactor biosynthesis; biotin biosynthesis. Its function is as follows. Catalyzes the decarboxylative condensation of pimeloyl-[acyl-carrier protein] and L-alanine to produce 8-amino-7-oxononanoate (AON), [acyl-carrier protein], and carbon dioxide. This Bordetella bronchiseptica (strain ATCC BAA-588 / NCTC 13252 / RB50) (Alcaligenes bronchisepticus) protein is Putative 8-amino-7-oxononanoate synthase (bioF).